Consider the following 402-residue polypeptide: p-cumate 2,3-dioxygenase system, ferredoxin--NAD(+) reductase component (402 aa).

5 residues coordinate FAD: A16, K51, V83, R131, and D275.

Belongs to the FAD-dependent oxidoreductase family. The p-cumate 2,3-dioxygenase multicomponent enzyme system is composed of an electron transfer component and a dioxygenase component (iron sulfur protein (ISP)). The electron transfer component is composed of a ferredoxin reductase (CmtAa) and a ferredoxin (CmtAd), and the dioxygenase component is formed of a large alpha subunit (CmtAb) and a small beta subunit (CmtAc). It depends on FAD as a cofactor.

It carries out the reaction 2 reduced [2Fe-2S]-[ferredoxin] + NAD(+) + H(+) = 2 oxidized [2Fe-2S]-[ferredoxin] + NADH. Its pathway is aromatic compound metabolism; p-cumate degradation; acetaldehyde and pyruvate from p-cumate. Its function is as follows. Component of the p-cumate 2,3-dioxygenase multicomponent enzyme system which catalyzes the incorporation of both atoms of molecular oxygen into p-cumate to form cis-2,3-dihydroxy-2,3-dihydro-p-cumate. Ferredoxin reductase catalyzes the transfer of electrons from NADH to ferredoxin (CmtAd). The sequence is that of p-cumate 2,3-dioxygenase system, ferredoxin--NAD(+) reductase component from Pseudomonas putida (Arthrobacter siderocapsulatus).